We begin with the raw amino-acid sequence, 660 residues long: tRNA 5-methylaminomethyl-2-thiouridine biosynthesis bifunctional protein MnmC (660 aa).

The segment at 1–241 is tRNA (mnm(5)s(2)U34)-methyltransferase; the sequence is MNDHPAQDAF…KREILRGHLQ (241 aa). The FAD-dependent cmnm(5)s(2)U34 oxidoreductase stretch occupies residues 268-660; it reads IGAGLAGCAT…FLLRKLIRGT (393 aa).

This sequence in the N-terminal section; belongs to the methyltransferase superfamily. tRNA (mnm(5)s(2)U34)-methyltransferase family. It in the C-terminal section; belongs to the DAO family. The cofactor is FAD.

It is found in the cytoplasm. It carries out the reaction 5-aminomethyl-2-thiouridine(34) in tRNA + S-adenosyl-L-methionine = 5-methylaminomethyl-2-thiouridine(34) in tRNA + S-adenosyl-L-homocysteine + H(+). In terms of biological role, catalyzes the last two steps in the biosynthesis of 5-methylaminomethyl-2-thiouridine (mnm(5)s(2)U) at the wobble position (U34) in tRNA. Catalyzes the FAD-dependent demodification of cmnm(5)s(2)U34 to nm(5)s(2)U34, followed by the transfer of a methyl group from S-adenosyl-L-methionine to nm(5)s(2)U34, to form mnm(5)s(2)U34. The protein is tRNA 5-methylaminomethyl-2-thiouridine biosynthesis bifunctional protein MnmC of Stutzerimonas stutzeri (strain A1501) (Pseudomonas stutzeri).